The following is a 411-amino-acid chain: Corticotropin-releasing factor receptor 2 (411 aa).

The segment at residues 1–19 (MDAALLHSLLEANCSLALA) is a signal peptide (not cleaved). At 1–108 (MDAALLHSLL…EPILDDKQRK (108 aa)) the chain is on the extracellular side. N-linked (GlcNAc...) asparagine glycans are attached at residues asparagine 13, asparagine 41, asparagine 74, asparagine 86, and asparagine 94. Disulfide bonds link cysteine 14/cysteine 50, cysteine 40/cysteine 83, tryptophan 51/arginine 77, and cysteine 64/cysteine 98. A helical transmembrane segment spans residues 109 to 139 (YDLHYRIALVVNYLGHCVSVAALVAAFLLFL). At 140–146 (ALRSIRC) the chain is on the cytoplasmic side. Residues 147-171 (LRNVIHWNLITTFILRNVMWFLLQL) form a helical membrane-spanning segment. Residues 172 to 185 (VDHEVHESNEVWCR) lie on the Extracellular side of the membrane. A disulfide bridge links cysteine 184 with cysteine 254. Residues 186-214 (CITTIFNYFVVTNFFWMFVEGCYLHTAIV) form a helical membrane-spanning segment. Residues 215-221 (MTYSTER) lie on the Cytoplasmic side of the membrane. A helical transmembrane segment spans residues 222-249 (LRKCLFLFIGWCIPFPIIVAWAIGKLYY). Over 250–265 (ENEQCWFGKEPGDLVD) the chain is Extracellular. The helical transmembrane segment at 266–291 (YIYQGPIILVLLINFVFLFNIVRILM) threads the bilayer. Residues 292–302 (TKLRASTTSET) are Cytoplasmic-facing. A helical transmembrane segment spans residues 303–327 (IQYRKAVKATLVLLPLLGITYMLFF). Topologically, residues 328 to 334 (VNPGEDD) are extracellular. The helical transmembrane segment at 335–364 (LSQIMFIYFNSFLQSFQGFFVSVFYCFFNG) threads the bilayer. At 365–411 (EVRSAVRKRWHRWQDHHSLRVPMARAMSIPTSPTRISFHSIKQTAAV) the chain is on the cytoplasmic side.

It belongs to the G-protein coupled receptor 2 family. In terms of assembly, monomer. Interacts (via N-terminal extracellular domain) with CRF, UCN, UCN2 and UCN3. Has highest affinity for UCN, and considerably lower affinity for CRF, UNC2 and UCN3. An N-glycosylation site within the signal peptide impedes its proper cleavage and function.

The protein resides in the cell membrane. Functionally, G-protein coupled receptor for CRH (corticotropin-releasing factor), UCN (urocortin), UCN2 and UCN3. Has high affinity for UCN. Ligand binding causes a conformation change that triggers signaling via guanine nucleotide-binding proteins (G proteins) and down-stream effectors, such as adenylate cyclase. Promotes the activation of adenylate cyclase, leading to increased intracellular cAMP levels. The sequence is that of Corticotropin-releasing factor receptor 2 (CRHR2) from Homo sapiens (Human).